The primary structure comprises 38 residues: GVPTDVKCRGSPQCIQPCKDAGMRFGKCMNGKCHCTPK.

3 cysteine pairs are disulfide-bonded: C8-C28, C14-C33, and C18-C35.

This sequence belongs to the short scorpion toxin superfamily. Potassium channel inhibitor family. Alpha-KTx 03 subfamily. As to expression, expressed by the venom gland.

The protein resides in the secreted. In terms of biological role, blocks the voltage-gated potassium channel Kv1.3/KCNA3 (IC(50)=7.2 nM). Correnti and colleagues have also shown that this toxin inhibits Kv1.1/KCNA1, which is different from Abdel-Mottaleb and colleagues conclusions. This Odontobuthus doriae (Yellow Iranian scorpion) protein is Potassium channel toxin alpha-KTx 3.11.